The sequence spans 407 residues: Putative aspartate aminotransferase, cytoplasmic 2 (407 aa).

Position 249 is an N6-(pyridoxal phosphate)lysine (lysine 249).

The protein belongs to the class-I pyridoxal-phosphate-dependent aminotransferase family. As to quaternary structure, homodimer. The cofactor is pyridoxal 5'-phosphate.

The protein resides in the cytoplasm. The enzyme catalyses L-aspartate + 2-oxoglutarate = oxaloacetate + L-glutamate. In Bos taurus (Bovine), this protein is Putative aspartate aminotransferase, cytoplasmic 2 (GOT1L1).